A 286-amino-acid polypeptide reads, in one-letter code: Probable ketoamine kinase YniA (286 aa).

91–93 (DYL) lines the ATP pocket. Aspartate 193 serves as the catalytic Proton acceptor.

The protein belongs to the fructosamine kinase family.

Ketoamine kinase that phosphorylates ketoamines on the third carbon of the sugar moiety to generate ketoamine 3-phosphate. Its precise substrate are unknown: does not have ribulosamine and/or erythrulosamine 3-kinase activity in vitro. This is Probable ketoamine kinase YniA (yniA) from Escherichia coli (strain K12).